We begin with the raw amino-acid sequence, 457 residues long: Cysteine--tRNA ligase (457 aa).

Zn(2+) is bound at residue cysteine 31. A 'HIGH' region motif is present at residues 33–43 (PTVYNYAHIGN). Residues cysteine 211, histidine 236, and glutamate 240 each coordinate Zn(2+). The 'KMSKS' region motif lies at 269–273 (KMSKS). An ATP-binding site is contributed by lysine 272.

Belongs to the class-I aminoacyl-tRNA synthetase family. In terms of assembly, monomer. The cofactor is Zn(2+).

Its subcellular location is the cytoplasm. The enzyme catalyses tRNA(Cys) + L-cysteine + ATP = L-cysteinyl-tRNA(Cys) + AMP + diphosphate. This chain is Cysteine--tRNA ligase, found in Xanthomonas campestris pv. campestris (strain ATCC 33913 / DSM 3586 / NCPPB 528 / LMG 568 / P 25).